A 551-amino-acid polypeptide reads, in one-letter code: (6-4)DNA photolyase (551 aa).

One can recognise a Photolyase/cryptochrome alpha/beta domain in the interval 13–157 (AAAMVWFRKG…DVFSPVSHTL (145 aa)). Glutamate 254 provides a ligand contact to phosphate. FAD is bound by residues lysine 255, 268–272 (TTVLS), 309–313 (QLLWR), 372–375 (WMHH), arginine 378, 407–409 (DSD), and asparagine 413. Tryptophan 312 provides a ligand contact to DNA. Residues 374 to 379 (HHLARH) form an interaction with DNA region. Residue tryptophan 419 participates in DNA binding. Positions 508–551 (YASNRLDDDKPDKGKSSNSSRRKLSAGSQVTPNSSKTKQLKRSS) are disordered. Positions 512 to 522 (RLDDDKPDKGK) are enriched in basic and acidic residues. Residues 533 to 544 (AGSQVTPNSSKT) show a composition bias toward polar residues.

The protein belongs to the DNA photolyase class-1 family. FAD serves as cofactor.

The catalysed reaction is (6-4) photoproduct (in DNA) = 2 pyrimidine residues (in DNA).. Functionally, involved in repair of UV radiation-induced DNA damage. Catalyzes the photoreactivation of pyrimidine [6-4] pyrimidone photoproduct (6-4 products). The polypeptide is (6-4)DNA photolyase (UVR3) (Oryza sativa subsp. japonica (Rice)).